The following is a 503-amino-acid chain: Maturase K (503 aa).

Belongs to the intron maturase 2 family. MatK subfamily.

Its subcellular location is the plastid. The protein localises to the chloroplast. In terms of biological role, usually encoded in the trnK tRNA gene intron. Probably assists in splicing its own and other chloroplast group II introns. The polypeptide is Maturase K (Liquidambar orientalis (Oriental sweet gum)).